The chain runs to 546 residues: Chaperonin GroEL (546 aa).

Residues 30 to 33 (TLGP), lysine 51, 87 to 91 (DGTTT), glycine 415, 479 to 481 (NAA), and aspartate 495 each bind ATP.

Belongs to the chaperonin (HSP60) family. As to quaternary structure, forms a cylinder of 14 subunits composed of two heptameric rings stacked back-to-back. Interacts with the co-chaperonin GroES.

The protein localises to the cytoplasm. It carries out the reaction ATP + H2O + a folded polypeptide = ADP + phosphate + an unfolded polypeptide.. Together with its co-chaperonin GroES, plays an essential role in assisting protein folding. The GroEL-GroES system forms a nano-cage that allows encapsulation of the non-native substrate proteins and provides a physical environment optimized to promote and accelerate protein folding. The sequence is that of Chaperonin GroEL from Bordetella avium (strain 197N).